The sequence spans 420 residues: Histidine--tRNA ligase (420 aa).

Belongs to the class-II aminoacyl-tRNA synthetase family. In terms of assembly, homodimer.

The protein resides in the cytoplasm. The catalysed reaction is tRNA(His) + L-histidine + ATP = L-histidyl-tRNA(His) + AMP + diphosphate + H(+). This Saccharopolyspora erythraea (strain ATCC 11635 / DSM 40517 / JCM 4748 / NBRC 13426 / NCIMB 8594 / NRRL 2338) protein is Histidine--tRNA ligase.